A 120-amino-acid polypeptide reads, in one-letter code: NAD(P)H-quinone oxidoreductase subunit 3, chloroplastic (120 aa).

A run of 3 helical transmembrane segments spans residues Ile9–Gly29, Met64–Met84, and Val88–Ser108.

It belongs to the complex I subunit 3 family. In terms of assembly, NDH is composed of at least 16 different subunits, 5 of which are encoded in the nucleus.

The protein localises to the plastid. It localises to the chloroplast thylakoid membrane. It carries out the reaction a plastoquinone + NADH + (n+1) H(+)(in) = a plastoquinol + NAD(+) + n H(+)(out). It catalyses the reaction a plastoquinone + NADPH + (n+1) H(+)(in) = a plastoquinol + NADP(+) + n H(+)(out). NDH shuttles electrons from NAD(P)H:plastoquinone, via FMN and iron-sulfur (Fe-S) centers, to quinones in the photosynthetic chain and possibly in a chloroplast respiratory chain. The immediate electron acceptor for the enzyme in this species is believed to be plastoquinone. Couples the redox reaction to proton translocation, and thus conserves the redox energy in a proton gradient. The chain is NAD(P)H-quinone oxidoreductase subunit 3, chloroplastic from Carica papaya (Papaya).